The primary structure comprises 424 residues: MRVAIETYGCTTNQADSDIMRGFLSGEFELSSVEDAEVVIINSCGVIDFTERKIIRRMLDLKREGKKVVLAGCLTRISKEALSVADSALSPDNLDMVVDAVYSALNGRKLFTERRFIDKAEFSHLKCRLRENAIAIVSISEGCLGKCSFCATKFARGRLRSFSMDAIVREAERAVRAGYREIQLTSQDTGAYGMDKGRAMLPELLRKISEIEGEFRVRVGMMNPQHAVRMLDELINAYSSEKIYKFLHIPVQSGDNRILEDMKRNHTVEDYVEVVEAFRNSFDDVLISTDIIVGFPTETEEAFWKSYELIKETRPDIVNITRYSARKGTPAARLRDIPGWIKKERSRKLTDLMRKIGLENNKRFVGKKLRVLVTKEGKNGRNLARMNSYRAVVTEGAVGEFVEVKIKDCRFNYLIGQLAAEQPQ.

One can recognise an MTTase N-terminal domain in the interval 1 to 106 (MRVAIETYGC…VVDAVYSALN (106 aa)). [4Fe-4S] cluster is bound by residues cysteine 10, cysteine 44, cysteine 73, cysteine 143, cysteine 147, and cysteine 150. In terms of domain architecture, Radical SAM core spans 129 to 359 (LRENAIAIVS…TDLMRKIGLE (231 aa)). In terms of domain architecture, TRAM spans 362-420 (KRFVGKKLRVLVTKEGKNGRNLARMNSYRAVVTEGAVGEFVEVKIKDCRFNYLIGQLAA).

It belongs to the methylthiotransferase family. CDKAL1 subfamily. [4Fe-4S] cluster serves as cofactor.

The catalysed reaction is N(6)-L-threonylcarbamoyladenosine(37) in tRNA + (sulfur carrier)-SH + AH2 + 2 S-adenosyl-L-methionine = 2-methylsulfanyl-N(6)-L-threonylcarbamoyladenosine(37) in tRNA + (sulfur carrier)-H + 5'-deoxyadenosine + L-methionine + A + S-adenosyl-L-homocysteine + 2 H(+). Catalyzes the methylthiolation of N6-threonylcarbamoyladenosine (t(6)A), leading to the formation of 2-methylthio-N6-threonylcarbamoyladenosine (ms(2)t(6)A) at position 37 in tRNAs that read codons beginning with adenine. The sequence is that of Probable threonylcarbamoyladenosine tRNA methylthiotransferase from Archaeoglobus fulgidus (strain ATCC 49558 / DSM 4304 / JCM 9628 / NBRC 100126 / VC-16).